Reading from the N-terminus, the 301-residue chain is ATP synthase gamma chain (301 aa).

This sequence belongs to the ATPase gamma chain family. F-type ATPases have 2 components, CF(1) - the catalytic core - and CF(0) - the membrane proton channel. CF(1) has five subunits: alpha(3), beta(3), gamma(1), delta(1), epsilon(1). CF(0) has three main subunits: a, b and c.

It is found in the cell inner membrane. Functionally, produces ATP from ADP in the presence of a proton gradient across the membrane. The gamma chain is believed to be important in regulating ATPase activity and the flow of protons through the CF(0) complex. This is ATP synthase gamma chain from Bordetella parapertussis (strain 12822 / ATCC BAA-587 / NCTC 13253).